The chain runs to 189 residues: Adenine phosphoribosyltransferase (189 aa).

It belongs to the purine/pyrimidine phosphoribosyltransferase family. In terms of assembly, homodimer.

The protein localises to the cytoplasm. It catalyses the reaction AMP + diphosphate = 5-phospho-alpha-D-ribose 1-diphosphate + adenine. It functions in the pathway purine metabolism; AMP biosynthesis via salvage pathway; AMP from adenine: step 1/1. Catalyzes a salvage reaction resulting in the formation of AMP, that is energically less costly than de novo synthesis. In Frankia alni (strain DSM 45986 / CECT 9034 / ACN14a), this protein is Adenine phosphoribosyltransferase.